We begin with the raw amino-acid sequence, 609 residues long: Oxidoreductase tpcJ (609 aa).

The signal sequence occupies residues 1–16 (MITVIKWLVSGCCALA). Asn63, Asn107, Asn113, Asn240, Asn283, Asn471, and Asn601 each carry an N-linked (GlcNAc...) asparagine glycan. 3 Plastocyanin-like domains span residues 66–186 (VSQQ…HGPS), 196–351 (PWLL…RYDE), and 429–567 (VDWK…EQPK).

The protein belongs to the multicopper oxidase family. Specifically expressed in conidia.

It functions in the pathway secondary metabolite biosynthesis. Its function is as follows. Oxidoreductase; part of the gene cluster that mediates the biosynthesis of trypacidin, a mycotoxin with antiprotozoal activity and that plays a role in the infection process. The pathway begins with the synthesis of atrochrysone thioester by the polyketide synthase (PKS) tpcC. The atrochrysone carboxyl ACP thioesterase tpcB then breaks the thioester bond and releases the atrochrysone carboxylic acid from tpcC. The decarboxylase tpcK converts atrochrysone carboxylic acid to atrochrysone which is further reduced into emodin anthrone. The next step is performed by the emodin anthrone oxygenase tpcL that catalyzes the oxidation of emodinanthrone to emodin. Emodin O-methyltransferase encoded by tpcA catalyzes methylation of the 8-hydroxy group of emodin to form questin. Ring cleavage of questin by questin oxidase tpcI leads to desmethylsulochrin via several intermediates including questin epoxide. Another methylation step catalyzed by tpcM leads to the formation of sulochrin which is further converted to monomethylsulfochrin by tpcH. Finally, the tpcJ catalyzes the conversion of monomethylsulfochrin to trypacidin. Trypacidin is toxic for human pulmonary and bronchial epithelial cells by initiating the intracellular formation of nitric oxide (NO) and hydrogen peroxide (H(2)O(2)), thus triggering host necrotic cell death. The trypacidin pathway is also able to produce endocrocin via a distinct route from the endocrocin Enc pathway. The sequence is that of Oxidoreductase tpcJ from Aspergillus fumigatus (strain ATCC MYA-4609 / CBS 101355 / FGSC A1100 / Af293) (Neosartorya fumigata).